Here is a 359-residue protein sequence, read N- to C-terminus: 5-formaminoimidazole-4-carboxamide-1-(beta)-D-ribofuranosyl 5'-monophosphate synthetase (359 aa).

5-amino-1-(5-phospho-beta-D-ribosyl)imidazole-4-carboxamide is bound by residues H28 and S95. In terms of domain architecture, ATP-grasp spans 115-346 (ELMIWETDRD…MGRRIAREIK (232 aa)). ATP is bound by residues 144–206 (PEEI…ANIY) and E228. N256 contributes to the 5-amino-1-(5-phospho-beta-D-ribosyl)imidazole-4-carboxamide binding site. Mg(2+) contacts are provided by E295 and E308.

This sequence belongs to the phosphohexose mutase family. Requires Mg(2+) as cofactor. Mn(2+) serves as cofactor.

It carries out the reaction 5-amino-1-(5-phospho-beta-D-ribosyl)imidazole-4-carboxamide + formate + ATP = 5-formamido-1-(5-phospho-D-ribosyl)imidazole-4-carboxamide + ADP + phosphate. It functions in the pathway purine metabolism; IMP biosynthesis via de novo pathway; 5-formamido-1-(5-phospho-D-ribosyl)imidazole-4-carboxamide from 5-amino-1-(5-phospho-D-ribosyl)imidazole-4-carboxamide (formate route): step 1/1. In terms of biological role, catalyzes the ATP- and formate-dependent formylation of 5-aminoimidazole-4-carboxamide-1-beta-d-ribofuranosyl 5'-monophosphate (AICAR) to 5-formaminoimidazole-4-carboxamide-1-beta-d-ribofuranosyl 5'-monophosphate (FAICAR) in the absence of folates. This chain is 5-formaminoimidazole-4-carboxamide-1-(beta)-D-ribofuranosyl 5'-monophosphate synthetase, found in Archaeoglobus fulgidus (strain ATCC 49558 / DSM 4304 / JCM 9628 / NBRC 100126 / VC-16).